We begin with the raw amino-acid sequence, 200 residues long: Small ribosomal subunit protein uS4 (200 aa).

One can recognise an S4 RNA-binding domain in the interval serine 92 to valine 155.

The protein belongs to the universal ribosomal protein uS4 family. In terms of assembly, part of the 30S ribosomal subunit. Contacts protein S5. The interaction surface between S4 and S5 is involved in control of translational fidelity.

In terms of biological role, one of the primary rRNA binding proteins, it binds directly to 16S rRNA where it nucleates assembly of the body of the 30S subunit. With S5 and S12 plays an important role in translational accuracy. The sequence is that of Small ribosomal subunit protein uS4 from Staphylococcus epidermidis (strain ATCC 35984 / DSM 28319 / BCRC 17069 / CCUG 31568 / BM 3577 / RP62A).